A 235-amino-acid chain; its full sequence is MNTTPDTPTPRALRELTPLEARIVGVLVEKQHTVPDTYPLSLNALTAGCNQKTARAPVMSVSEDEVTTALDGLKHLSLVMEGSSSRVPRFEHNVNRVLGIPSQAIALLTILLLRGPQTAAELRLNSARLHGFADISSVEAFLDELAARAQPLVVRLPRAPGARENRWMHLMCGEVNLADFASADAGGADSVPPSEFEALKAEQKRLADEVARLNALVLRMASELGIDVDAQGDAS.

Belongs to the UPF0502 family.

The sequence is that of UPF0502 protein Bcep18194_B0081 from Burkholderia lata (strain ATCC 17760 / DSM 23089 / LMG 22485 / NCIMB 9086 / R18194 / 383).